The chain runs to 1400 residues: MKDLLNFLKAQHKTEEFDAIKIGLSSPDMIRSWSFGEVKKPETINYRTFKPERDGLFCARIFGPVKDYECLCGKYKRLKHRGVICEKCGVEVTQTKVRRDRMGHIELASPVAHIWFLKSLPSRIGLLMDIPLRDIERVLYFEMYVVTEPGMTDLEKSQMLTEEEYLDRLEEWGDEFTAKMGAEAIKDLLGSMDMHAEAEQMREELETTNSETKRKKVTKRLKLVEAFIQSGNNPEWMILTVLPVLPPDLRPLVPLDGGRFATSDLNDLYRRVINRNNRLKRLLELAAPDIIVRNEKRMLQESVDALLDNGRRGRAITGSNKRPLKSLADMIKGKQGRFRQNLLGKRVDYSGRSVITVGPYLRLHQCGLPKKMALELFKPFIYSKLETRGLATTIKAAKKMVEREEAVVWDILDEVIREHPVLLNRAPTLHRLGIQAFEPVLIEGKAIQLHPLVCAAYNADFDGDQMAVHVPLTLEAQLEARTLMMSTNNILSPASGDPIIVPSQDVVLGLYYMTRDKINVKGEGMYLSGPAEAEKAYRTKQAELHARVKVRITETVVDEDGNSTTETKMVDTTIGRAMLWQIVPAGLPYSIVNQKLGKKQISNLLNEAYRKLGLKDTVIFADQIMYTGFAYAALSGVSVGIDDMVVPPAKYTEIAEAEEEVREIQEQYQSGLVTAGERYNKVIDIWASTNDRVAKAMMANLSSETVVNRDGEEEQQESFNSIYMMADSGARGSAAQIRQLAGMRGLMARPDGSIIETPITANFKEGLNVLQYFISTHGARKGLADTALKTANSGYLTRRLVDVAQDVVVTEHDCGTHEGVDMMPHIEGGDVKVALTELALGRVVAEDVLKPGTEDVLIPRNTLIDEKWCQIMEENSVDSMKVRSVVTCDSDFGCCAQCYGRDLARGHLVNQGEAVGVIAAQSIGEPGTQLTMRTFHIGGAASTAAAENSIQAKTTGTVKLHNAKFVVNKDKKLVITSRASELTIIDEFGRTKEKHKLPYGSMLSKGDNDAVTAGEVVANWEAHTMPIITEVAGRIQFVDMIDGVTVSRQTDDLTGLSSSEVTDPAARPAAGKDMRPAIKLVDEQGNDVMIPGTEMPAHYFLPGKAIVNIEDGAEVGIGDTLSRIPQKSGGNKDITGGLPRVADLFEARKPKEPAILAEHTGTVSFGKETKGKRRLVITRDSGVTYEEMIPKHRQLNVFEGERVERGDVIADGPESPHDILRLRGVHAVTQYIANEVQEVYRLQGVKINDKHIETIVRQMLRKCTITHAGDSEFLPGEQVEYSQVKIANRNLEAEGKEPARFERELLGITKASLATESFISAASFQETTRVLTEAAVSGKRDDLRGLKENVIVGRLIPAGTGFAYHQDRQAKRAEAQEGPSAEQATDNLAALLNAGFSSDE.

Cys-70, Cys-72, Cys-85, and Cys-88 together coordinate Zn(2+). Mg(2+)-binding residues include Asp-460, Asp-462, and Asp-464. Cys-814, Cys-888, Cys-895, and Cys-898 together coordinate Zn(2+). The interval 1367–1400 (DRQAKRAEAQEGPSAEQATDNLAALLNAGFSSDE) is disordered.

The protein belongs to the RNA polymerase beta' chain family. The RNAP catalytic core consists of 2 alpha, 1 beta, 1 beta' and 1 omega subunit. When a sigma factor is associated with the core the holoenzyme is formed, which can initiate transcription. Mg(2+) serves as cofactor. Requires Zn(2+) as cofactor.

The catalysed reaction is RNA(n) + a ribonucleoside 5'-triphosphate = RNA(n+1) + diphosphate. Its function is as follows. DNA-dependent RNA polymerase catalyzes the transcription of DNA into RNA using the four ribonucleoside triphosphates as substrates. The protein is DNA-directed RNA polymerase subunit beta' of Vibrio campbellii (strain ATCC BAA-1116).